The sequence spans 274 residues: MAVVKSKPTSAGRRHVVKVTNNDLHKGAPYAPLLDTKSKSGGRNNNGRITTRHVGGGHKQHYRMVDFRRNKDGISAVVERLEYDPNRSANIALIRYADGERRYIIASKGMVAGNIVFSGADAPIKAGNTLPLQNIPVGSTVHCVELKPGKGAQVARSAGASAQLVAREGRYVTLRLRSGEMRKVLTECRATLGEVSNSEHSLRVLGKAGATRWRGVRPTVRGAAMNPVDHPHGGGEGRSKGGRHPVTPWGVPTKGYKTRSNKRTDKLIVRRRTK.

2 disordered regions span residues 28 to 59 and 222 to 274; these read APYA…GGHK and GAAM…RRTK. Polar residues predominate over residues 39–49; it reads KSGGRNNNGRI. The span at 229-239 shows a compositional bias: basic and acidic residues; it reads DHPHGGGEGRS.

This sequence belongs to the universal ribosomal protein uL2 family. Part of the 50S ribosomal subunit. Forms a bridge to the 30S subunit in the 70S ribosome.

In terms of biological role, one of the primary rRNA binding proteins. Required for association of the 30S and 50S subunits to form the 70S ribosome, for tRNA binding and peptide bond formation. It has been suggested to have peptidyltransferase activity; this is somewhat controversial. Makes several contacts with the 16S rRNA in the 70S ribosome. The polypeptide is Large ribosomal subunit protein uL2 (Marinomonas sp. (strain MWYL1)).